A 1039-amino-acid polypeptide reads, in one-letter code: Antigenic heat-stable 120 kDa protein (1039 aa).

Disordered stretches follow at residues 1-115 (MSKD…TSDP), 408-438 (SSIETPTTTQVPPITPANQPLQPETSQMPQP), and 1020-1039 (QSENLNKSTPIKRESSFPPR). Over residues 31 to 44 (PISSTANKDGNPDT) the composition is skewed to polar residues. The span at 54-69 (EYTEEQKQKLEQEQKE) shows a compositional bias: basic and acidic residues. Positions 85-114 (FSFTPASSTQSTPSISSLSGGISSDSQTSD) are enriched in low complexity. The segment covering 424-438 (ANQPLQPETSQMPQP) has biased composition (polar residues). Positions 1030–1039 (IKRESSFPPR) are enriched in basic and acidic residues.

It is found in the cytoplasm. In Rickettsia felis (strain ATCC VR-1525 / URRWXCal2) (Rickettsia azadi), this protein is Antigenic heat-stable 120 kDa protein (sca4).